The sequence spans 178 residues: MANKLFLVSATLAFFFLLTNASIYRTVVEFDEDDATNPAGPFRIPKCRKEFQQAQHLKACQQWLHKQAMQSGSGPSWTLDGEFDFEDDMENPQGPQQRPPLLQQCCNELHQEEPLCVCPTLKGASKAVKQQIQQQGQQQGKLQMVSRIYQTATHLPKVCKIPQVSVCPFQKTMPGPSY.

Positions 1-21 (MANKLFLVSATLAFFFLLTNA) are cleaved as a signal peptide. Propeptides lie at residues 22-38 (SIYR…ATNP) and 75-94 (PSWT…NPQG).

The protein belongs to the 2S seed storage albumins family. As to quaternary structure, the mature protein consists of a small and a large chain linked by disulfide bonds. Cotyledons and the axis.

Its function is as follows. The small, basic, water-soluble napins are one of the two major kinds of storage proteins synthesized in the seed during its maturation. The protein is Napin-B (NAPB) of Brassica napus (Rape).